Here is a 359-residue protein sequence, read N- to C-terminus: Histidinol-phosphate aminotransferase (359 aa).

K217 carries the N6-(pyridoxal phosphate)lysine modification.

The protein belongs to the class-II pyridoxal-phosphate-dependent aminotransferase family. Histidinol-phosphate aminotransferase subfamily. As to quaternary structure, homodimer. Pyridoxal 5'-phosphate serves as cofactor.

The enzyme catalyses L-histidinol phosphate + 2-oxoglutarate = 3-(imidazol-4-yl)-2-oxopropyl phosphate + L-glutamate. Its pathway is amino-acid biosynthesis; L-histidine biosynthesis; L-histidine from 5-phospho-alpha-D-ribose 1-diphosphate: step 7/9. The chain is Histidinol-phosphate aminotransferase from Salmonella typhi.